A 78-amino-acid polypeptide reads, in one-letter code: Serine--glyoxylate aminotransferase (78 aa).

This sequence belongs to the class-V pyridoxal-phosphate-dependent aminotransferase family. In terms of assembly, homodimer. Requires pyridoxal 5'-phosphate as cofactor. As to expression, expressed in leaves but not in root tissue or seedlings.

The protein resides in the peroxisome. The enzyme catalyses glyoxylate + L-serine = 3-hydroxypyruvate + glycine. It carries out the reaction glyoxylate + L-alanine = glycine + pyruvate. With respect to regulation, inhibited by aminooxyacetate. This chain is Serine--glyoxylate aminotransferase, found in Triticum aestivum (Wheat).